The sequence spans 704 residues: MQDERPVDQLTEAEAAAELARLAEAIEAANTAYHTHDAPQISDADYDALRLRNRAIEEQFPELRRSDSPSDRVGGALAEGFAKVRHEVRMLSLENAFDLAEVEDWIERIRRYLGHVGDLLFTAEPKIDGLSLSLRYEKGRLVQAATRGDGETGENVTENARTIADLPTELDGAPDLLEVRGEVYMSHEDFAALNGRQEAAGQRLFANPRNAAAGSLRQLDPAVTASRPLRFFAYAWGAHSEPLAATQHEAIARLAALGFTTNPLTRLCTGPEELLAQHAEIERQRAALGYDIDGVVYKVDDLALQRRLGFRASTPRWAIAHKFAAQLAWTQLEGIDVQVGRTGALSPVARLKPVTVGGVVVANATLHNEDYIAGRDSKGQEIRGGKDIRVGDWVQVYRAGDVIPKVADVDLDRRPEGAAPYRFPETCPECGSEAIREPGDSVRRCTGGLICPAQQVERLKHFVSRAAFDIEGLGAKQVEALWRDGWIRQPADIFELPNRYREGIQRLENREGWGRKSAENLFAAIEARRRIALHRLIFALGIRHVGETTATLLATHYGSWAAFEAAMTRAEVGAGPEWQDLLSIDGVGAVLATSLVTAFHQEAERAAVEALAAHLTVEDAEVRAPVASPVAGRIVVFTGTLEKMSRAEAKARAEALGAKVSGSVSARTDLVVAGPGAGSKAKQAAALGIETIDEDGWLRLIGDA.

NAD(+)-binding positions include 43–47 (DADYD), 92–93 (SL), and Glu-124. The N6-AMP-lysine intermediate role is filled by Lys-126. NAD(+) is bound by residues Arg-147, Glu-182, Lys-298, and Lys-322. Zn(2+) contacts are provided by Cys-427, Cys-430, Cys-445, and Cys-451. Positions 625-704 (PVASPVAGRI…DGWLRLIGDA (80 aa)) constitute a BRCT domain.

The protein belongs to the NAD-dependent DNA ligase family. LigA subfamily. The cofactor is Mg(2+). It depends on Mn(2+) as a cofactor.

It catalyses the reaction NAD(+) + (deoxyribonucleotide)n-3'-hydroxyl + 5'-phospho-(deoxyribonucleotide)m = (deoxyribonucleotide)n+m + AMP + beta-nicotinamide D-nucleotide.. Its function is as follows. DNA ligase that catalyzes the formation of phosphodiester linkages between 5'-phosphoryl and 3'-hydroxyl groups in double-stranded DNA using NAD as a coenzyme and as the energy source for the reaction. It is essential for DNA replication and repair of damaged DNA. The chain is DNA ligase from Cereibacter sphaeroides (strain KD131 / KCTC 12085) (Rhodobacter sphaeroides).